The chain runs to 116 residues: UPF0482 protein PC1_2049 (116 aa).

An N-terminal signal peptide occupies residues Met-1–Ala-31.

It belongs to the UPF0482 family.

This is UPF0482 protein PC1_2049 from Pectobacterium carotovorum subsp. carotovorum (strain PC1).